A 338-amino-acid polypeptide reads, in one-letter code: Tryptophan--tRNA ligase (338 aa).

ATP is bound by residues Gln12–Thr14 and Gly20–Asn21. Positions Pro13 to Asn21 match the 'HIGH' region motif. Residue Asp136 participates in L-tryptophan binding. ATP contacts are provided by residues Gly148 to Asp150, Ile191, and Lys200 to Ser204. The 'KMSKS' region signature appears at Lys200–Ser204.

The protein belongs to the class-I aminoacyl-tRNA synthetase family. As to quaternary structure, homodimer.

The protein resides in the cytoplasm. The enzyme catalyses tRNA(Trp) + L-tryptophan + ATP = L-tryptophyl-tRNA(Trp) + AMP + diphosphate + H(+). In terms of biological role, catalyzes the attachment of tryptophan to tRNA(Trp). The polypeptide is Tryptophan--tRNA ligase (Prochlorococcus marinus subsp. pastoris (strain CCMP1986 / NIES-2087 / MED4)).